Reading from the N-terminus, the 783-residue chain is Cyclin-dependent kinase 11A (783 aa).

Residues 18–58 (QEKKRRKEQEEKAEIKRLKNSDDRDSKRDSLEEGELRDHCM) show a composition bias toward basic and acidic residues. Residues 18 to 396 (QEKKRRKEQE…SALTEGDYVP (379 aa)) are disordered. Phosphoserine is present on residues serine 47 and serine 72. Positions 95-125 (EKVHHRKDEKRKEKWKHARVKEREHERRKRH) are enriched in basic residues. Composition is skewed to basic and acidic residues over residues 126-215 (REEQ…DKVK), 226-241 (PPRERFELGDGRKPGE), and 252-264 (QLKEEKMEERDLL). Serine 271 carries the phosphoserine modification. The span at 279-290 (SAESSSAESGSG) shows a compositional bias: low complexity. Composition is skewed to acidic residues over residues 291–352 (SEEE…EERE) and 371–380 (ESEEAEEEVG). A Protein kinase domain is found at 427–647 (QCLNRIEEGT…VFKELGTPSE (221 aa)). ATP contacts are provided by residues 432–440 (IEEGTYGVV) and lysine 455. At serine 470 the chain carries Phosphoserine; by CDK7. A Phosphothreonine; by CDK7 modification is found at threonine 476. Aspartate 550 serves as the catalytic Proton acceptor. Position 577 is a phosphoserine (serine 577). Position 582 is a phosphotyrosine (tyrosine 582). 2 positions are modified to phosphothreonine: threonine 583 and threonine 739. The interval 721-783 (SMFPTWPAKS…AAGPGFSLKF (63 aa)) is disordered. The residue at position 740 (serine 740) is a Phosphoserine.

Belongs to the protein kinase superfamily. CMGC Ser/Thr protein kinase family. CDC2/CDKX subfamily. As to quaternary structure, the cleaved p110 isoform, p110C, binds to the serine/threonine kinase PAK1. The p58 isoform but not the p110 isoform or p110C interacts with CCND3. The p110 isoforms are found in large molecular weight complexes containing CCNL1 and SFRS7. Mg(2+) is required as a cofactor. During apoptosis, induced by Fas or tumor necrosis factor, specific CKD11 p110 isoforms are cleaved by caspases to produce a protein (p110C) that contains the C-terminal kinase domain of the CDK11 proteins. As to expression, expressed ubiquitously. Some evidence of isoform-specific tissue distribution.

The protein resides in the cytoplasm. It localises to the nucleus. The enzyme catalyses L-seryl-[protein] + ATP = O-phospho-L-seryl-[protein] + ADP + H(+). The catalysed reaction is L-threonyl-[protein] + ATP = O-phospho-L-threonyl-[protein] + ADP + H(+). Its activity is regulated as follows. Phosphorylation at Thr-436 or Tyr-437 inactivates the enzyme, while phosphorylation at Thr-583 activates it. In terms of biological role, appears to play multiple roles in cell cycle progression, cytokinesis and apoptosis. The p110 isoforms have been suggested to be involved in pre-mRNA splicing, potentially by phosphorylating the splicing protein SFRS7. The p58 isoform may act as a negative regulator of normal cell cycle progression. This is Cyclin-dependent kinase 11A (CDK11A) from Homo sapiens (Human).